The sequence spans 647 residues: Chaperone protein DnaK (647 aa).

Residue T198 is modified to Phosphothreonine; by autocatalysis. A disordered region spans residues 603–647 (EQAQGAGGAQGFDPNAFQGGDAGQQQKADDGVVDAEFTEVKDDKK). Positions 618–628 (AFQGGDAGQQQ) are enriched in low complexity.

The protein belongs to the heat shock protein 70 family.

Its function is as follows. Acts as a chaperone. The chain is Chaperone protein DnaK from Acinetobacter baylyi (strain ATCC 33305 / BD413 / ADP1).